The following is a 368-amino-acid chain: Polymerase delta-interacting protein 2 (368 aa).

A mitochondrion-targeting transit peptide spans 1–51; the sequence is MAACTARRALAVGSRWWSRSLTGARWPRPLCAAAGAGAFSPASTTTTRRHL. Positions 235–360 constitute an ApaG domain; that stretch reads RETTENIRVT…FSLESNKDEK (126 aa). At Thr292 the chain carries Phosphothreonine.

In terms of assembly, interacts with PCNA and POLD2. Interacts with SSBP1. Interacts with PRIMPOL; leading to enhance DNA polymerase activity of PRIMPOL. Interacts with POLH. Interacts with POLD1; leading to stimulate DNA polymerase activity of POLD1.

The protein resides in the mitochondrion matrix. It localises to the nucleus. Functionally, involved in DNA damage tolerance by regulating translesion synthesis (TLS) of templates carrying DNA damage lesions such as 8oxoG and abasic sites. May act by stimulating activity of DNA polymerases involved in TLS, such as PRIMPOL and polymerase delta (POLD1). The polypeptide is Polymerase delta-interacting protein 2 (Homo sapiens (Human)).